The primary structure comprises 202 residues: COMM domain-containing protein 10 (202 aa).

Residue Ala-2 is modified to N-acetylalanine. Residues 133 to 202 (KLETVGWQLN…TIQAQLDSLT (70 aa)) enclose the COMM domain. Ser-155 carries the phosphoserine modification.

The protein belongs to the COMM domain-containing protein 10 family. Component of the commander complex consisting of the CCC subcomplex and the retriever subcomplex. Component of the CCC (COMMD/CCDC22/CCDC93) subcomplex consisting of COMMD1, COMMD2, COMMD3, COMMD4, COMMD5, COMMD6, COMMD7, COMMD8, COMMD9, COMMD10, CCDC22 and CCDC93; within the complex forms a heterodimer with COMMD5. Interacts with RELA, RELB, NFKB1/p105, NFKB2/p100. Interacts with CCDC22, CCDC93, SCNN1B, CUL1, CUL2, CUL3, CUL4A, CUL4B, CUL7. Ubiquitous.

It localises to the cytoplasm. The protein resides in the nucleus. In terms of biological role, scaffold protein in the commander complex that is essential for endosomal recycling of transmembrane cargos; the commander complex is composed of the CCC subcomplex and the retriever subcomplex. May modulate activity of cullin-RING E3 ubiquitin ligase (CRL) complexes. May down-regulate activation of NF-kappa-B. The polypeptide is COMM domain-containing protein 10 (COMMD10) (Homo sapiens (Human)).